We begin with the raw amino-acid sequence, 463 residues long: Ribosomal protein uS12 methylthiotransferase RimO (463 aa).

Residues 15 to 130 enclose the MTTase N-terminal domain; it reads PKVGMVSLGC…VMQAVHSHLP (116 aa). Residues C24, C60, C89, C161, C165, and C168 each coordinate [4Fe-4S] cluster. The region spanning 147-392 is the Radical SAM core domain; sequence LTPRHYAYLK…MEVAEEVSAA (246 aa). Positions 395-463 constitute a TRAM domain; the sequence is ARKIGKTLKV…ADGHDLWGEV (69 aa).

Belongs to the methylthiotransferase family. RimO subfamily. [4Fe-4S] cluster is required as a cofactor.

Its subcellular location is the cytoplasm. It carries out the reaction L-aspartate(89)-[ribosomal protein uS12]-hydrogen + (sulfur carrier)-SH + AH2 + 2 S-adenosyl-L-methionine = 3-methylsulfanyl-L-aspartate(89)-[ribosomal protein uS12]-hydrogen + (sulfur carrier)-H + 5'-deoxyadenosine + L-methionine + A + S-adenosyl-L-homocysteine + 2 H(+). Functionally, catalyzes the methylthiolation of an aspartic acid residue of ribosomal protein uS12. The chain is Ribosomal protein uS12 methylthiotransferase RimO from Burkholderia mallei (strain NCTC 10229).